We begin with the raw amino-acid sequence, 160 residues long: V-type proton ATPase subunit c (160 aa).

The Lumenal portion of the chain corresponds to 1 to 6 (MSDLCP). The helical transmembrane segment at 7 to 27 (VYAPFFGSIGCAAAIVFTCFG) threads the bilayer. At 28–53 (ASYGTAKSGVGICATSVTRPDLLVKN) the chain is on the cytoplasmic side. The chain crosses the membrane as a helical span at residues 54–74 (VVPVVMAGIIAIYGLVVSVLV). Residues 75–90 (SDSLSQKQALYTGFIQ) lie on the Lumenal side of the membrane. Residues 91–111 (LGAGLSVGLSGLAAGFAIGIV) form a helical membrane-spanning segment. Topologically, residues 112 to 129 (GDAGVRGTAQQPRLFVGM) are cytoplasmic. Residues 130–150 (ILILIFAEVLGLYGLIVALLL) traverse the membrane as a helical segment. Residues 151–160 (NSRASQDVTC) lie on the Lumenal side of the membrane.

This sequence belongs to the V-ATPase proteolipid subunit family. As to quaternary structure, V-ATPase is a heteromultimeric enzyme composed of a peripheral catalytic V1 complex (components A to H) attached to an integral membrane V0 proton pore complex (components: a, c, c', c'', d, e, f and VOA1). The decameric c-ring forms the proton-conducting pore, and is composed of eight proteolipid subunits c, one subunit c' and one subunit c''.

Its subcellular location is the vacuole membrane. In terms of biological role, proton-conducting pore forming subunit of the V0 complex of vacuolar(H+)-ATPase (V-ATPase), a multisubunit enzyme composed of a peripheral complex (V1) that hydrolyzes ATP and a membrane integral complex (V0) that translocates protons. V-ATPase is responsible for acidifying and maintaining the pH of intracellular compartments. The polypeptide is V-type proton ATPase subunit c (VMA3) (Candida tropicalis (Yeast)).